The primary structure comprises 84 residues: Esculentin-1ISb (84 aa).

Residues 1-22 (MFTLKKPLLLIVLLGIISLSLC) form the signal peptide. Positions 23–36 (EQERAADEDEGTKI) are cleaved as a propeptide — removed in mature form. An intrachain disulfide couples cysteine 78 to cysteine 84.

Expressed by the skin glands.

Its subcellular location is the secreted. Functionally, has antimicrobial activity against Gram-negative bacterium E.coli ATCC 8739 (MIC=3.1 ug), against Gram positive bacteria S.aureus ATCC 6538 (MIC=3.1 ug), methicillin-resistant S.aureus ATCC 43300 (MIC=12.5 ug), B.subtilis ATCC 6633 (MIC=12.5 ug) and against fungus C.albicans ATCC 90028 (MIC=50 ug). In Odorrana ishikawae (Ishikawa's frog), this protein is Esculentin-1ISb.